A 187-amino-acid polypeptide reads, in one-letter code: Large ribosomal subunit protein uL5 (187 aa).

The protein belongs to the universal ribosomal protein uL5 family. Part of the 50S ribosomal subunit; part of the 5S rRNA/L5/L18/L25 subcomplex. Contacts the 5S rRNA and the P site tRNA. Forms a bridge to the 30S subunit in the 70S ribosome.

This is one of the proteins that bind and probably mediate the attachment of the 5S RNA into the large ribosomal subunit, where it forms part of the central protuberance. In the 70S ribosome it contacts protein S13 of the 30S subunit (bridge B1b), connecting the 2 subunits; this bridge is implicated in subunit movement. Contacts the P site tRNA; the 5S rRNA and some of its associated proteins might help stabilize positioning of ribosome-bound tRNAs. This is Large ribosomal subunit protein uL5 from Brachyspira hyodysenteriae (strain ATCC 49526 / WA1).